The sequence spans 1407 residues: DNA-directed RNA polymerase subunit beta' (1407 aa).

Zn(2+)-binding residues include Cys-70, Cys-72, Cys-85, and Cys-88. The Mg(2+) site is built by Asp-460, Asp-462, and Asp-464. Zn(2+)-binding residues include Cys-814, Cys-888, Cys-895, and Cys-898. N6-acetyllysine is present on Lys-972.

This sequence belongs to the RNA polymerase beta' chain family. The RNAP catalytic core consists of 2 alpha, 1 beta, 1 beta' and 1 omega subunit. When a sigma factor is associated with the core the holoenzyme is formed, which can initiate transcription. Mg(2+) serves as cofactor. It depends on Zn(2+) as a cofactor.

The enzyme catalyses RNA(n) + a ribonucleoside 5'-triphosphate = RNA(n+1) + diphosphate. DNA-dependent RNA polymerase catalyzes the transcription of DNA into RNA using the four ribonucleoside triphosphates as substrates. The chain is DNA-directed RNA polymerase subunit beta' from Shigella dysenteriae serotype 1 (strain Sd197).